Here is a 696-residue protein sequence, read N- to C-terminus: ATP-dependent zinc metalloprotease FtsH (696 aa).

The Cytoplasmic segment spans residues 1–29 (MWLQVTNCSTLHSSLSYCGANTLSDMAKN). A helical membrane pass occupies residues 30-50 (LILWLVIAVVLMSVFQSFGPS). Residues 51–124 (DSAGRQVDYT…LGTPPEEPSL (74 aa)) are Periplasmic-facing. The helical transmembrane segment at 125–145 (LASIFISWFPMLLLIGVWVFF) threads the bilayer. At 146-696 (MRQMQGGGGG…APKEDDKPQA (551 aa)) the chain is on the cytoplasmic side. 219–226 (GPPGTGKT) provides a ligand contact to ATP. Zn(2+) is bound at residue H441. E442 is a catalytic residue. Residues H445 and D519 each contribute to the Zn(2+) site. A disordered region spans residues 627-696 (RAPKGWGDTD…APKEDDKPQA (70 aa)). Residues 650-696 (PEAKTESAPEAKAEANVETEEKPVAADSEELKPKAEQAPKEDDKPQA) show a composition bias toward basic and acidic residues.

The protein in the central section; belongs to the AAA ATPase family. This sequence in the C-terminal section; belongs to the peptidase M41 family. In terms of assembly, homohexamer. Requires Zn(2+) as cofactor.

Its subcellular location is the cell inner membrane. In terms of biological role, acts as a processive, ATP-dependent zinc metallopeptidase for both cytoplasmic and membrane proteins. Plays a role in the quality control of integral membrane proteins. The chain is ATP-dependent zinc metalloprotease FtsH from Photobacterium profundum (strain SS9).